Consider the following 22-residue polypeptide: Thylakoid lumenal 11 kDa protein (22 aa).

The tract at residues Phe1–Phe22 is disordered.

It to A.thaliana At2g44920.

Its subcellular location is the plastid. It is found in the chloroplast thylakoid lumen. The protein is Thylakoid lumenal 11 kDa protein of Spinacia oleracea (Spinach).